Consider the following 399-residue polypeptide: Proteinase-activated receptor 2 (399 aa).

The N-terminal stretch at Met1–Thr25 is a signal peptide. Residues Glu26–Arg38 constitute a propeptide, removed for receptor activation. N-linked (GlcNAc...) asparagine glycosylation occurs at Asn33. At Ser39–Gly73 the chain is on the extracellular side. The helical transmembrane segment at Lys74–Leu103 threads the bilayer. Residues Phe104–His110 are Cytoplasmic-facing. The helical transmembrane segment at Pro111–His139 threads the bilayer. Over Gly140–Lys151 the chain is Extracellular. Cysteines 150 and 228 form a disulfide. The helical transmembrane segment at Val152–Ile179 threads the bilayer. The Cytoplasmic segment spans residues Val180–His185. Residues Pro186 to Val213 traverse the membrane as a helical segment. Residues Met214–Leu237 lie on the Extracellular side of the membrane. Asn224 carries an N-linked (GlcNAc...) asparagine glycan. The helical transmembrane segment at Val238–Leu271 threads the bilayer. Residues Arg272 to His279 lie on the Cytoplasmic side of the membrane. A helical transmembrane segment spans residues Ser280–Gln319. The Extracellular segment spans residues Arg320–Tyr325. A helical membrane pass occupies residues Ala326–Val349. Over Ser350 to Tyr399 the chain is Cytoplasmic. The S-palmitoyl cysteine moiety is linked to residue Cys363.

It belongs to the G-protein coupled receptor 1 family. In terms of assembly, interacts with TLR4, COPS5 and TMED2. Interacts with GNAQ, GNA11, GNA12, GNA13 and GNA14. A proteolytic cleavage generates a new N-terminus that functions as a tethered ligand. Activating serine proteases include trypsin, mast cell tryptase, coagulation factors VII and Xa, myeloblastin/PRTN3 and membrane-type serine protease 1/ST14. Proposed subsequent cleavage by serine proteases is leading to receptor deactivation and include neutrophil elastase and cathepsin G. At least in part, implicated proteases are also shown to activate the receptor; the glycosylation status of the receptor is thought to contribute to the difference. Post-translationally, N-glycosylated and sialylated. In terms of processing, multiple phosphorylated on serine and threonine residues in the cytoplasmic region upon receptor activation; required for receptor desensitization and recruitment of beta-arrestin. Monoubiquitinated by Cbl at the plasma membrane and in early endosomes; not required for receptor endocytosis but for translocation to late endosomes or lysosomes. Deubiquitination involves Stambp and Usp8; required for lysosomal trafficking and receptor degradation.

It localises to the cell membrane. Functionally, receptor for trypsin and trypsin-like enzymes coupled to G proteins. Its function is mediated through the activation of several signaling pathways including phospholipase C (PLC), intracellular calcium, mitogen-activated protein kinase (MAPK), I-kappaB kinase/NF-kappaB and Rho. Can also be transactivated by cleaved F2r/Par1. Involved in modulation of inflammatory responses and regulation of innate and adaptive immunity, and acts as a sensor for proteolytic enzymes generated during infection. Generally is promoting inflammation. Can signal synergistically with Tlr4 and probably Tlr2 in inflammatory responses and modulates Tlr3 signaling. Has a protective role in establishing the endothelial barrier; the activity involves coagulation factor X. Regulates endothelial cell barrier integrity during neutrophil extravasation, probably following proteolytic cleavage by PRTN3. Proposed to have a bronchoprotective role in airway epithelium, but also shown to compromise the airway epithelial barrier by interrupting E-cadherin adhesion. Involved in the regulation of vascular tone; activation results in hypotension presumably mediated by vasodilation. Associates with a subset of G proteins alpha subunits such as GNAQ, GNA11, GNA14, GNA12 and GNA13, but probably not with G(o)-alpha, G(i) subunit alpha-1 and G(i) subunit alpha-2. Believed to be a class B receptor which internalizes as a complex with arrestin and traffic with it to endosomal vesicles, presumably as desensitized receptor, for extended periods of time. Mediates inhibition of TNF-alpha stimulated JNK phosphorylation via coupling to GNAQ and GNA11; the function involves dissociation of Ripk1 and Tradd from Tnfr1. Mediates phosphorylation of nuclear factor NF-kappa-B RELA subunit at 'Ser-536'; the function involves Ikbkb and is predominantly independent of G proteins. Involved in cellular migration. Involved in cytoskeletal rearrangement and chemotaxis through beta-arrestin-promoted scaffolds; the function is independent of GNAQ and GNA11 and involves promotion of cofilin dephosphorylation and actin filament severing. Induces redistribution of Cops5 from the plasma membrane to the cytosol and activation of the JNK cascade is mediated by Cops5. Involved in the recruitment of leukocytes to the sites of inflammation and is the major PAR receptor capable of modulating eosinophil function such as pro-inflammatory cytokine secretion, superoxide production and degranulation. During inflammation promotes dendritic cell maturation, trafficking to the lymph nodes and subsequent T-cell activation. Involved in antimicrobial response of innate immune cells; activation enhances phagocytosis of Gram-positive and killing of Gram-negative bacteria. Acts synergistically with interferon-gamma in enhancing antiviral responses. Mediates activation of pro-inflammatory and pro-fibrotic responses in fibroblasts, triggered by coagulation factor Xa (F10). Probably mediates activation of barrier protective signaling responses in endothelial cells, triggered by coagulation factor Xa (F10). This is Proteinase-activated receptor 2 (F2rl1) from Mus musculus (Mouse).